We begin with the raw amino-acid sequence, 491 residues long: MNTQQLAKLRSIVPEMRRVRHIHFVGIGGAGMGGIAEVLANEGYQISGSDLAPNPVTQQLMNLGVTIYFNHRPENVRDASVVVVSSAISADNPEIVAAHEARIPVIRRAEMLAELMRFRHGIAIAGTHGKTTTTAMVSSIYAEAGLDPTFVNGGLVKAAGVHARLGHGRYLIAEADESDASFLHLQPMVAIVTNIEADHMDTYQGDFENLKQTFINFLHNLPFYGRAVMCVDDPVIRELLPRVGRQTTTYGFSEDADVRVEDYQQIGPQGHFTLLRQDKEPIRVTLNAPGRHNALNAAAAVAVATEEGIDDEAILRALESFQGTGRRFDFLGEFPLAPVNGKSGTAMLVDDYGHHPTEVDATIKAARAGWPDKNLVMLFQPHRFTRTRDLYDDFANVLTQVDTLLMLEVYPAGEAPIPGADSRSLCRTIRGRGKIDPILVPDPAQVAEMLAPVLTGNDLILVQGAGNIGKIARSLAEIKLKPQTPEEEQHD.

Residue Gly126–Thr132 coordinates ATP.

This sequence belongs to the MurCDEF family.

Its subcellular location is the cytoplasm. It carries out the reaction UDP-N-acetyl-alpha-D-muramate + L-alanine + ATP = UDP-N-acetyl-alpha-D-muramoyl-L-alanine + ADP + phosphate + H(+). It participates in cell wall biogenesis; peptidoglycan biosynthesis. Functionally, cell wall formation. This Shigella dysenteriae serotype 1 (strain Sd197) protein is UDP-N-acetylmuramate--L-alanine ligase.